A 463-amino-acid polypeptide reads, in one-letter code: Major capsid protein (463 aa).

Positions 1 to 24 (MTIEKNLSDVQQKYADQFQEDVVK) are excised as a propeptide.

The protein localises to the virion. In terms of biological role, assembles to form an icosahedral capsid. The protein is Major capsid protein of Staphylococcus phage K.